We begin with the raw amino-acid sequence, 129 residues long: Small ribosomal subunit protein uS11 (129 aa).

Belongs to the universal ribosomal protein uS11 family. In terms of assembly, part of the 30S ribosomal subunit. Interacts with proteins S7 and S18. Binds to IF-3.

Functionally, located on the platform of the 30S subunit, it bridges several disparate RNA helices of the 16S rRNA. Forms part of the Shine-Dalgarno cleft in the 70S ribosome. This is Small ribosomal subunit protein uS11 from Zymomonas mobilis subsp. mobilis (strain ATCC 31821 / ZM4 / CP4).